The primary structure comprises 180 residues: ATP-dependent protease subunit HslV (180 aa).

The active site involves Thr-7. Residues Ala-163, Cys-166, and Thr-169 each coordinate Na(+).

Belongs to the peptidase T1B family. HslV subfamily. A double ring-shaped homohexamer of HslV is capped on each side by a ring-shaped HslU homohexamer. The assembly of the HslU/HslV complex is dependent on binding of ATP.

It localises to the cytoplasm. The enzyme catalyses ATP-dependent cleavage of peptide bonds with broad specificity.. Allosterically activated by HslU binding. Its function is as follows. Protease subunit of a proteasome-like degradation complex believed to be a general protein degrading machinery. This Cytophaga hutchinsonii (strain ATCC 33406 / DSM 1761 / CIP 103989 / NBRC 15051 / NCIMB 9469 / D465) protein is ATP-dependent protease subunit HslV.